The sequence spans 287 residues: Transmembrane protein 163 (287 aa).

The tract at residues 1–63 (METAAGSERR…ESGQFSDGLE (63 aa)) is disordered. Residues 1–86 (METAAGSERR…HEAQNYRKKA (86 aa)) lie on the Cytoplasmic side of the membrane. Phosphoserine is present on residues Ser11, Ser53, Ser55, and Ser59. A required for interaction with MCOLN1 region spans residues 40 to 70 (EPPQPEEERQLRISESGQFSDGLEDRGLLES). Residues 87-107 (LWVSWFSIIVTLALAVAAFTV) traverse the membrane as a helical segment. Topologically, residues 108–114 (SVMRYSA) are extracellular. The chain crosses the membrane as a helical span at residues 115–135 (SAFGFAFDAILDVLSSAIVLW). Residues 136–148 (RYSNAAAVHSAHR) lie on the Cytoplasmic side of the membrane. Residues 149–169 (EYIACVILGVIFLLSSVCIVV) traverse the membrane as a helical segment. At 170–185 (KAIHDLSTKLLPEVDD) the chain is on the extracellular side. A helical transmembrane segment spans residues 186 to 206 (FLFSVSILSGILCSILAVLKF). Residues 207–215 (MLGKVLTSR) lie on the Cytoplasmic side of the membrane. A helical membrane pass occupies residues 216-236 (ALITDGFNSLVGGVMGFSILL). Residues 237–253 (SAEVFKHNSAVWYLDGS) lie on the Extracellular side of the membrane. The chain crosses the membrane as a helical span at residues 254–274 (IGVLIGLTIFAYGVKLLIDMV). Topologically, residues 275–287 (PRVRQTRHYEMFE) are cytoplasmic.

The protein belongs to the TMEM163 family. As to quaternary structure, homodimer. Interacts with MCOLN1/TRPML1. Interacts with SLC30A1, SLC30A2, SLC30A3 and SLC30A4.

Its subcellular location is the cytoplasmic vesicle. The protein resides in the secretory vesicle. It is found in the synaptic vesicle membrane. The protein localises to the early endosome membrane. It localises to the late endosome membrane. Its subcellular location is the lysosome membrane. The protein resides in the cell membrane. The enzyme catalyses Zn(2+)(in) = Zn(2+)(out). In terms of biological role, zinc ion transporter that mediates zinc efflux and plays a crucial role in intracellular zinc homeostasis. Binds the divalent cations Zn(2+), Ni(2+), and to a minor extent Cu(2+). Is a functional modulator of P2X purinoceptors, including P2RX1, P2RX3, P2RX4 and P2RX7. Plays a role in central nervous system development and is required for myelination, and survival and proliferation of oligodendrocytes. The sequence is that of Transmembrane protein 163 (TMEM163) from Bos taurus (Bovine).